Here is a 154-residue protein sequence, read N- to C-terminus: Crossover junction endodeoxyribonuclease RuvC (154 aa).

Residues aspartate 7, glutamate 67, and aspartate 139 contribute to the active site. Mg(2+) is bound by residues aspartate 7, glutamate 67, and aspartate 139.

The protein belongs to the RuvC family. Homodimer which binds Holliday junction (HJ) DNA. The HJ becomes 2-fold symmetrical on binding to RuvC with unstacked arms; it has a different conformation from HJ DNA in complex with RuvA. In the full resolvosome a probable DNA-RuvA(4)-RuvB(12)-RuvC(2) complex forms which resolves the HJ. Mg(2+) serves as cofactor.

Its subcellular location is the cytoplasm. The catalysed reaction is Endonucleolytic cleavage at a junction such as a reciprocal single-stranded crossover between two homologous DNA duplexes (Holliday junction).. Its function is as follows. The RuvA-RuvB-RuvC complex processes Holliday junction (HJ) DNA during genetic recombination and DNA repair. Endonuclease that resolves HJ intermediates. Cleaves cruciform DNA by making single-stranded nicks across the HJ at symmetrical positions within the homologous arms, yielding a 5'-phosphate and a 3'-hydroxyl group; requires a central core of homology in the junction. The consensus cleavage sequence is 5'-(A/T)TT(C/G)-3'. Cleavage occurs on the 3'-side of the TT dinucleotide at the point of strand exchange. HJ branch migration catalyzed by RuvA-RuvB allows RuvC to scan DNA until it finds its consensus sequence, where it cleaves and resolves the cruciform DNA. This chain is Crossover junction endodeoxyribonuclease RuvC, found in Prochlorococcus marinus (strain MIT 9313).